Consider the following 104-residue polypeptide: Small ribosomal subunit protein uS10 (104 aa).

The protein belongs to the universal ribosomal protein uS10 family. In terms of assembly, part of the 30S ribosomal subunit.

In terms of biological role, involved in the binding of tRNA to the ribosomes. The protein is Small ribosomal subunit protein uS10 of Hydrogenobaculum sp. (strain Y04AAS1).